The chain runs to 353 residues: Guanine nucleotide-binding protein G(q) subunit alpha (353 aa).

2 S-palmitoyl cysteine lipidation sites follow: C3 and C4. The region spanning 32–353 is the G-alpha domain; sequence RELKLLLLGT…QLNLKEYNLV (322 aa). The tract at residues 35 to 48 is G1 motif; sequence KLLLLGTGESGKST. Residues 40 to 47, 174 to 180, 199 to 203, 268 to 271, and A325 contribute to the GTP site; these read GTGESGKS, LRVRVPT, DVGGQ, and NKKD. The Mg(2+) site is built by S47 and T180. The interval 172-180 is G2 motif; the sequence is DILRVRVPT. A G3 motif region spans residues 195–204; that stretch reads FRMVDVGGQR. Residues 264-271 form a G4 motif region; the sequence is ILFLNKKD. Residues 323 to 328 form a G5 motif region; the sequence is TCATDT.

Belongs to the G-alpha family. G(q) subfamily. As to quaternary structure, g proteins are composed of 3 units; alpha, beta and gamma. The alpha chain contains the guanine nucleotide binding site.

Functionally, guanine nucleotide-binding proteins (G proteins) are involved as modulators or transducers in various transmembrane signaling systems. In Lymnaea stagnalis (Great pond snail), this protein is Guanine nucleotide-binding protein G(q) subunit alpha.